Consider the following 574-residue polypeptide: Cytochrome P450 306a1 (574 aa).

Residues Glu-303–Asp-314 show a composition bias toward basic and acidic residues. The interval Glu-303–Asp-333 is disordered. A compositionally biased stretch (acidic residues) spans Ser-320–Asp-333. Cys-505 lines the heme pocket.

Belongs to the cytochrome P450 family. The cofactor is heme. In terms of tissue distribution, first seen at the early (syncytial) blastoderm stage 4. During cellularization of the blastoderm (stage 5), stripes of expression appear and remain through to stage 10. Expression becomes undetectable during germ band retraction (stages 11-14). By stage 15, some expression resumes in the primordium of the ring gland, so that by stage 17 strong expression is seen, but only in the ring gland. This specific localization continues throughout the larval instars (at protein level). Expressed in the prothoracic gland cells of the larval ring gland (RG). Levels decline just after the molt to the third instar then increase later during the wandering stage. Low levels of expression are seen in the larval brain and fat body. In the adult, majority of expression is restricted to the ovaries, with low levels in the head and carcass of both sexes.

The protein localises to the endoplasmic reticulum membrane. Its subcellular location is the microsome membrane. It catalyses the reaction 2,22,25-trideoxyecdysone + 2 reduced [adrenodoxin] + O2 + 2 H(+) = 2,22-dideoxyecdysone + 2 oxidized [adrenodoxin] + H2O. It participates in steroid biosynthesis; ecdysteroid biosynthesis. Functionally, involved in the metabolism of insect hormones; responsible for ecdysteroid C25-hydroxylase activity. May be involved in the breakdown of synthetic insecticides. The sequence is that of Cytochrome P450 306a1 from Drosophila melanogaster (Fruit fly).